The following is a 997-amino-acid chain: FHIP family protein CPIJ015043 (997 aa).

2 disordered regions span residues 558–579 (DHRS…QQLQ) and 759–922 (NVVL…GGAA). Residues 569–579 (QQHLHQQQQLQ) show a composition bias toward low complexity. A compositionally biased stretch (gly residues) spans 763–780 (GGSGPGGPRLSNGGGGTG). Composition is skewed to low complexity over residues 781-792 (SSITSSLSQTTP) and 830-889 (GSNS…MVGS). Residues 911–922 (IGSGTVGGGGAA) are compositionally biased toward gly residues.

The protein belongs to the FHIP family.

This is FHIP family protein CPIJ015043 from Culex quinquefasciatus (Southern house mosquito).